The chain runs to 94 residues: Pyrimidine/purine nucleoside phosphorylase 2 (94 aa).

The protein belongs to the nucleoside phosphorylase PpnP family.

It catalyses the reaction a purine D-ribonucleoside + phosphate = a purine nucleobase + alpha-D-ribose 1-phosphate. It carries out the reaction adenosine + phosphate = alpha-D-ribose 1-phosphate + adenine. The enzyme catalyses cytidine + phosphate = cytosine + alpha-D-ribose 1-phosphate. The catalysed reaction is guanosine + phosphate = alpha-D-ribose 1-phosphate + guanine. It catalyses the reaction inosine + phosphate = alpha-D-ribose 1-phosphate + hypoxanthine. It carries out the reaction thymidine + phosphate = 2-deoxy-alpha-D-ribose 1-phosphate + thymine. The enzyme catalyses uridine + phosphate = alpha-D-ribose 1-phosphate + uracil. The catalysed reaction is xanthosine + phosphate = alpha-D-ribose 1-phosphate + xanthine. Catalyzes the phosphorolysis of diverse nucleosides, yielding D-ribose 1-phosphate and the respective free bases. Can use uridine, adenosine, guanosine, cytidine, thymidine, inosine and xanthosine as substrates. Also catalyzes the reverse reactions. The polypeptide is Pyrimidine/purine nucleoside phosphorylase 2 (Psychrobacter arcticus (strain DSM 17307 / VKM B-2377 / 273-4)).